We begin with the raw amino-acid sequence, 194 residues long: Protein GrpE (194 aa).

Residues 1 to 14 are compositionally biased toward basic and acidic residues; that stretch reads MSKMNPNEKKENAS. Positions 1 to 48 are disordered; that stretch reads MSKMNPNEKKENASKNENVNNEEATNLQEEQSNAADEAAGSDNVSGEV. The span at 24–34 shows a compositional bias: polar residues; it reads ATNLQEEQSNA.

The protein belongs to the GrpE family. Homodimer.

The protein resides in the cytoplasm. Its function is as follows. Participates actively in the response to hyperosmotic and heat shock by preventing the aggregation of stress-denatured proteins, in association with DnaK and GrpE. It is the nucleotide exchange factor for DnaK and may function as a thermosensor. Unfolded proteins bind initially to DnaJ; upon interaction with the DnaJ-bound protein, DnaK hydrolyzes its bound ATP, resulting in the formation of a stable complex. GrpE releases ADP from DnaK; ATP binding to DnaK triggers the release of the substrate protein, thus completing the reaction cycle. Several rounds of ATP-dependent interactions between DnaJ, DnaK and GrpE are required for fully efficient folding. This Parabacteroides distasonis (strain ATCC 8503 / DSM 20701 / CIP 104284 / JCM 5825 / NCTC 11152) protein is Protein GrpE.